Reading from the N-terminus, the 404-residue chain is Cysteine desulfurase IscS (404 aa).

Residues 75 to 76, N155, Q183, and 203 to 205 contribute to the pyridoxal 5'-phosphate site; these read AT and SSH. K206 carries the N6-(pyridoxal phosphate)lysine modification. A pyridoxal 5'-phosphate-binding site is contributed by T243. C328 serves as the catalytic Cysteine persulfide intermediate. C328 is a [2Fe-2S] cluster binding site.

This sequence belongs to the class-V pyridoxal-phosphate-dependent aminotransferase family. NifS/IscS subfamily. As to quaternary structure, homodimer. Forms a heterotetramer with IscU, interacts with other sulfur acceptors. It depends on pyridoxal 5'-phosphate as a cofactor.

It is found in the cytoplasm. The catalysed reaction is (sulfur carrier)-H + L-cysteine = (sulfur carrier)-SH + L-alanine. Its pathway is cofactor biosynthesis; iron-sulfur cluster biosynthesis. In terms of biological role, master enzyme that delivers sulfur to a number of partners involved in Fe-S cluster assembly, tRNA modification or cofactor biosynthesis. Catalyzes the removal of elemental sulfur atoms from cysteine to produce alanine. Functions as a sulfur delivery protein for Fe-S cluster synthesis onto IscU, an Fe-S scaffold assembly protein, as well as other S acceptor proteins. The chain is Cysteine desulfurase IscS from Haemophilus influenzae (strain PittGG).